Here is a 310-residue protein sequence, read N- to C-terminus: Putative dihydroorotate dehydrogenase A (fumarate) (310 aa).

Substrate contacts are provided by residues K45, 69 to 73, and N128; that span reads NSMGL. 45 to 46 serves as a coordination point for FMN; that stretch reads KT. An FMN-binding site is contributed by N128. C131 serves as the catalytic Nucleophile. FMN is bound by residues K165 and V193. 194–195 lines the substrate pocket; the sequence is NS. FMN contacts are provided by residues G220, 248 to 249, and 270 to 271; these read GG and GT.

The protein belongs to the dihydroorotate dehydrogenase family. Type 1 subfamily. Homodimer. The cofactor is FMN.

The protein resides in the cytoplasm. The catalysed reaction is (S)-dihydroorotate + fumarate = orotate + succinate. Its pathway is pyrimidine metabolism; UMP biosynthesis via de novo pathway. Functionally, catalyzes the conversion of dihydroorotate to orotate with fumarate as the electron acceptor. The protein is Putative dihydroorotate dehydrogenase A (fumarate) (pyrD) of Streptococcus agalactiae serotype Ia (strain ATCC 27591 / A909 / CDC SS700).